A 393-amino-acid polypeptide reads, in one-letter code: Flap endonuclease 1 (393 aa).

Positions 1–108 are N-domain; it reads MGILGLSKLL…SELQERRQRA (108 aa). Residue aspartate 34 participates in Mg(2+) binding. Arginine 74 contacts DNA. Mg(2+) is bound by residues aspartate 90, glutamate 162, glutamate 164, aspartate 183, and aspartate 185. An I-domain region spans residues 126–257; that stretch reads LMEKMSKRTV…QKAWEGIKKH (132 aa). Position 162 (glutamate 162) interacts with DNA. The DNA site is built by glycine 235 and aspartate 237. Aspartate 237 is a Mg(2+) binding site. The segment at 340 to 348 is interaction with PCNA; sequence TQGRLDQFF.

The protein belongs to the XPG/RAD2 endonuclease family. FEN1 subfamily. As to quaternary structure, interacts with PCNA. Three molecules of FEN1 bind to one PCNA trimer with each molecule binding to one PCNA monomer. PCNA stimulates the nuclease activity without altering cleavage specificity. Mg(2+) serves as cofactor. Phosphorylated. Phosphorylation upon DNA damage induces relocalization to the nuclear plasma.

The protein resides in the nucleus. The protein localises to the nucleolus. It is found in the nucleoplasm. It localises to the mitochondrion. Structure-specific nuclease with 5'-flap endonuclease and 5'-3' exonuclease activities involved in DNA replication and repair. During DNA replication, cleaves the 5'-overhanging flap structure that is generated by displacement synthesis when DNA polymerase encounters the 5'-end of a downstream Okazaki fragment. It enters the flap from the 5'-end and then tracks to cleave the flap base, leaving a nick for ligation. Also involved in the long patch base excision repair (LP-BER) pathway, by cleaving within the apurinic/apyrimidinic (AP) site-terminated flap. Acts as a genome stabilization factor that prevents flaps from equilibrating into structures that lead to duplications and deletions. Also possesses 5'-3' exonuclease activity on nicked or gapped double-stranded DNA, and exhibits RNase H activity. Also involved in replication and repair of rDNA and in repairing mitochondrial DNA. The sequence is that of Flap endonuclease 1 from Trypanosoma cruzi (strain CL Brener).